The chain runs to 92 residues: Acyl carrier protein (92 aa).

Residues 1 to 84 enclose the Carrier domain; sequence MPSTADERQL…QIAAHLAEAV (84 aa). S44 carries the post-translational modification O-(pantetheine 4'-phosphoryl)serine.

It belongs to the acyl carrier protein (ACP) family. In terms of processing, 4'-phosphopantetheine is transferred from CoA to a specific serine of apo-ACP by AcpS. This modification is essential for activity because fatty acids are bound in thioester linkage to the sulfhydryl of the prosthetic group.

Its subcellular location is the cytoplasm. The protein operates within lipid metabolism; fatty acid biosynthesis. Carrier of the growing fatty acid chain in fatty acid biosynthesis. This Streptomyces coelicolor (strain ATCC BAA-471 / A3(2) / M145) protein is Acyl carrier protein.